The sequence spans 565 residues: uncharacterized protein (565 aa).

The next 10 helical transmembrane spans lie at 28-48 (IFHF…LPFA), 73-93 (ASYG…DTGL), 109-129 (VLAI…FLVW), 169-189 (LFLF…FYFI), 262-282 (IVIQ…YPVL), 315-335 (LIVT…VITS), 364-384 (SLIF…FGVI), 393-413 (VFPW…AMFI), 461-481 (AFLV…LLPL), and 526-546 (TLGL…LTFV).

It belongs to the TrkH potassium transport family.

It is found in the cell membrane. This is an uncharacterized protein from Mycoplasma pneumoniae (strain ATCC 29342 / M129 / Subtype 1) (Mycoplasmoides pneumoniae).